The chain runs to 97 residues: UPF0235 protein LHK_03181 (97 aa).

The protein belongs to the UPF0235 family.

The chain is UPF0235 protein LHK_03181 from Laribacter hongkongensis (strain HLHK9).